A 215-amino-acid chain; its full sequence is MAGGGPTFSIELSAYGSDLPTDKASGDIPNEEGSGLSRVGSGIWSGRTVDYSSESSSSIGTPGDSEEEDEESEEDNDEEELGLASLRSLEDSLPSKGLSSHYKGKSKSFGNLGEIGSVKEVPKQENPLNKKRRLQIYNKLARKSFYSWQNPKSMPLLPVHEDNDDEEGDDGDLSDEERGGDVLARRPSFKNRALKSMSCFALSDLQEEEEEEEDE.

Disordered regions lie at residues 1–132 and 150–183; these read MAGG…NKKR and NPKSMPLLPVHEDNDDEEGDDGDLSDEERGGDVL. The segment covering 64–81 has biased composition (acidic residues); that stretch reads DSEEEDEESEEDNDEEEL. Positions 129–137 match the Nuclear localization signal motif; that stretch reads NKKRRLQIY. The span at 162 to 175 shows a compositional bias: acidic residues; sequence DNDDEEGDDGDLSD. The tract at residues 177–204 is kinase-inducible domain (KID); it reads ERGGDVLARRPSFKNRALKSMSCFALSD. A Phosphoserine; by PKA modification is found at Ser188.

In terms of assembly, interacts with HDA19; Ser-188 is critical for this interaction. Strongly expressed in stems, flowers, roots and immature siliques, but not detected in leaf blades of seedlings.

It is found in the nucleus. Its function is as follows. Transcription activator which may regulates gene expression through interaction with the histone deacetylase HDA19. The chain is KID-containing protein 1 from Brassica napus (Rape).